We begin with the raw amino-acid sequence, 156 residues long: Urease accessory protein UreE (156 aa).

The segment at 133 to 156 (RPESGAYGSGRTMGHDHGPFHVHA) is disordered. Basic and acidic residues predominate over residues 145 to 156 (MGHDHGPFHVHA).

This sequence belongs to the UreE family.

It is found in the cytoplasm. Functionally, involved in urease metallocenter assembly. Binds nickel. Probably functions as a nickel donor during metallocenter assembly. The sequence is that of Urease accessory protein UreE from Rhodobacter capsulatus (Rhodopseudomonas capsulata).